The chain runs to 325 residues: Lipoyl synthase (325 aa).

The interval 1–31 (MANLIDNTARSAASDARAARHPEKQKRADTP) is disordered. Over residues 17 to 31 (RAARHPEKQKRADTP) the composition is skewed to basic and acidic residues. Residues cysteine 65, cysteine 70, cysteine 76, cysteine 91, cysteine 95, cysteine 98, and serine 304 each contribute to the [4Fe-4S] cluster site. Residues 77-293 (WEQKHATFMI…ETIARAKGFL (217 aa)) form the Radical SAM core domain.

It belongs to the radical SAM superfamily. Lipoyl synthase family. Requires [4Fe-4S] cluster as cofactor.

It is found in the cytoplasm. It catalyses the reaction [[Fe-S] cluster scaffold protein carrying a second [4Fe-4S](2+) cluster] + N(6)-octanoyl-L-lysyl-[protein] + 2 oxidized [2Fe-2S]-[ferredoxin] + 2 S-adenosyl-L-methionine + 4 H(+) = [[Fe-S] cluster scaffold protein] + N(6)-[(R)-dihydrolipoyl]-L-lysyl-[protein] + 4 Fe(3+) + 2 hydrogen sulfide + 2 5'-deoxyadenosine + 2 L-methionine + 2 reduced [2Fe-2S]-[ferredoxin]. It functions in the pathway protein modification; protein lipoylation via endogenous pathway; protein N(6)-(lipoyl)lysine from octanoyl-[acyl-carrier-protein]: step 2/2. In terms of biological role, catalyzes the radical-mediated insertion of two sulfur atoms into the C-6 and C-8 positions of the octanoyl moiety bound to the lipoyl domains of lipoate-dependent enzymes, thereby converting the octanoylated domains into lipoylated derivatives. This chain is Lipoyl synthase, found in Maricaulis maris (strain MCS10) (Caulobacter maris).